Consider the following 225-residue polypeptide: Large ribosomal subunit protein bL25 (225 aa).

Residues 197 to 225 (PQREEQMEDTDTAAADEEGDKEEDADKQE) form a disordered region. A compositionally biased stretch (acidic residues) spans 202 to 225 (QMEDTDTAAADEEGDKEEDADKQE).

It belongs to the bacterial ribosomal protein bL25 family. CTC subfamily. Part of the 50S ribosomal subunit; part of the 5S rRNA/L5/L18/L25 subcomplex. Contacts the 5S rRNA. Binds to the 5S rRNA independently of L5 and L18.

This is one of the proteins that binds to the 5S RNA in the ribosome where it forms part of the central protuberance. This chain is Large ribosomal subunit protein bL25, found in Dichelobacter nodosus (strain VCS1703A).